Reading from the N-terminus, the 372-residue chain is Lipoyl synthase, mitochondrial (372 aa).

The N-terminal 27 residues, 1-27 (MSLRCGDAARTLGPRVFGRYFCSPVRP), are a transit peptide targeting the mitochondrion. [4Fe-4S] cluster contacts are provided by cysteine 106, cysteine 111, cysteine 117, cysteine 137, cysteine 141, cysteine 144, and serine 352. The region spanning 122-341 (EYATATATIM…EKVGNELGFH (220 aa)) is the Radical SAM core domain.

The protein belongs to the radical SAM superfamily. Lipoyl synthase family. Requires [4Fe-4S] cluster as cofactor.

The protein localises to the mitochondrion. The enzyme catalyses [[Fe-S] cluster scaffold protein carrying a second [4Fe-4S](2+) cluster] + N(6)-octanoyl-L-lysyl-[protein] + 2 oxidized [2Fe-2S]-[ferredoxin] + 2 S-adenosyl-L-methionine + 4 H(+) = [[Fe-S] cluster scaffold protein] + N(6)-[(R)-dihydrolipoyl]-L-lysyl-[protein] + 4 Fe(3+) + 2 hydrogen sulfide + 2 5'-deoxyadenosine + 2 L-methionine + 2 reduced [2Fe-2S]-[ferredoxin]. The protein operates within protein modification; protein lipoylation via endogenous pathway; protein N(6)-(lipoyl)lysine from octanoyl-[acyl-carrier-protein]: step 2/2. Catalyzes the radical-mediated insertion of two sulfur atoms into the C-6 and C-8 positions of the octanoyl moiety bound to the lipoyl domains of lipoate-dependent enzymes, thereby converting the octanoylated domains into lipoylated derivatives. This is Lipoyl synthase, mitochondrial from Homo sapiens (Human).